The primary structure comprises 264 residues: tRNA pseudouridine synthase A (264 aa).

Catalysis depends on Asp51, which acts as the Nucleophile. Substrate is bound at residue Tyr109.

Belongs to the tRNA pseudouridine synthase TruA family. As to quaternary structure, homodimer.

It carries out the reaction uridine(38/39/40) in tRNA = pseudouridine(38/39/40) in tRNA. Formation of pseudouridine at positions 38, 39 and 40 in the anticodon stem and loop of transfer RNAs. The sequence is that of tRNA pseudouridine synthase A from Polaromonas sp. (strain JS666 / ATCC BAA-500).